Reading from the N-terminus, the 216-residue chain is Endo-1,4-beta-xylanase 2 (216 aa).

The signal sequence occupies residues 1-27 (MVSFSSLFVAACAAVTAFALPNELEKR). The GH11 domain occupies 28 to 216 (AITSNEQGTN…SSGSASITVS (189 aa)). N-linked (GlcNAc...) asparagine glycosylation occurs at Asn87. The Nucleophile role is filled by Glu112. Glu203 serves as the catalytic Proton donor.

The protein belongs to the glycosyl hydrolase 11 (cellulase G) family.

The protein localises to the secreted. It catalyses the reaction Endohydrolysis of (1-&gt;4)-beta-D-xylosidic linkages in xylans.. It participates in glycan degradation; xylan degradation. Functionally, endo-1,4-beta-xylanase involved in the hydrolysis of xylan, a major structural heterogeneous polysaccharide found in plant biomass representing the second most abundant polysaccharide in the biosphere, after cellulose. This chain is Endo-1,4-beta-xylanase 2 (xyn2), found in Rhizopus oryzae (Mucormycosis agent).